Here is a 189-residue protein sequence, read N- to C-terminus: Ribosome maturation factor RimM (189 aa).

The PRC barrel domain maps to 118-189; it reads SGEYYWDDLI…IILVDWDENF (72 aa).

This sequence belongs to the RimM family. In terms of assembly, binds ribosomal protein uS19.

The protein resides in the cytoplasm. Its function is as follows. An accessory protein needed during the final step in the assembly of 30S ribosomal subunit, possibly for assembly of the head region. Essential for efficient processing of 16S rRNA. May be needed both before and after RbfA during the maturation of 16S rRNA. It has affinity for free ribosomal 30S subunits but not for 70S ribosomes. This chain is Ribosome maturation factor RimM, found in Ruthia magnifica subsp. Calyptogena magnifica.